The primary structure comprises 300 residues: Urease accessory protein UreD (300 aa).

Belongs to the UreD family. UreD, UreF and UreG form a complex that acts as a GTP-hydrolysis-dependent molecular chaperone, activating the urease apoprotein by helping to assemble the nickel containing metallocenter of UreC. The UreE protein probably delivers the nickel.

The protein resides in the cytoplasm. Its function is as follows. Required for maturation of urease via the functional incorporation of the urease nickel metallocenter. The protein is Urease accessory protein UreD of Prochlorococcus marinus (strain AS9601).